The primary structure comprises 429 residues: 3-phosphoshikimate 1-carboxyvinyltransferase (429 aa).

The 3-phosphoshikimate site is built by Lys22, Ser23, and Arg27. Lys22 serves as a coordination point for phosphoenolpyruvate. Gly94 and Arg122 together coordinate phosphoenolpyruvate. The 3-phosphoshikimate site is built by Ser167, Gln169, Asp315, and Lys342. A phosphoenolpyruvate-binding site is contributed by Gln169. Residue Asp315 is the Proton acceptor of the active site. 2 residues coordinate phosphoenolpyruvate: Arg346 and Arg388.

Belongs to the EPSP synthase family. Monomer.

The protein resides in the cytoplasm. The enzyme catalyses 3-phosphoshikimate + phosphoenolpyruvate = 5-O-(1-carboxyvinyl)-3-phosphoshikimate + phosphate. The protein operates within metabolic intermediate biosynthesis; chorismate biosynthesis; chorismate from D-erythrose 4-phosphate and phosphoenolpyruvate: step 6/7. Functionally, catalyzes the transfer of the enolpyruvyl moiety of phosphoenolpyruvate (PEP) to the 5-hydroxyl of shikimate-3-phosphate (S3P) to produce enolpyruvyl shikimate-3-phosphate and inorganic phosphate. This is 3-phosphoshikimate 1-carboxyvinyltransferase from Geobacter sp. (strain M21).